A 329-amino-acid chain; its full sequence is Serine/threonine-protein phosphatase PP2A catalytic subunit (329 aa).

The segment at 1-25 (MDNNMEIDAARSPEPHHLSPTTDPG) is disordered. Over residues 8–17 (DAARSPEPHH) the composition is skewed to basic and acidic residues. Mn(2+) contacts are provided by Asp77, His79, Asp105, and Asn137. His138 acts as the Proton donor in catalysis. Positions 187 and 261 each coordinate Mn(2+). A Leucine methyl ester modification is found at Leu329.

It belongs to the PPP phosphatase family. PP-2A subfamily. It depends on Mn(2+) as a cofactor.

It carries out the reaction O-phospho-L-seryl-[protein] + H2O = L-seryl-[protein] + phosphate. The catalysed reaction is O-phospho-L-threonyl-[protein] + H2O = L-threonyl-[protein] + phosphate. In terms of biological role, involved in hyphal morphogenesis. This Emericella nidulans (strain FGSC A4 / ATCC 38163 / CBS 112.46 / NRRL 194 / M139) (Aspergillus nidulans) protein is Serine/threonine-protein phosphatase PP2A catalytic subunit (pphA).